The sequence spans 958 residues: Probable protein phosphatase DDB_G0282105 (958 aa).

The next 2 membrane-spanning stretches (helical) occupy residues 2-22 (VLMM…SLMV) and 26-46 (FLEF…ILFF). The stretch at 142–330 (SASQQSELTN…KDKERERSSS (189 aa)) forms a coiled coil. Positions 312 to 328 (QEKEKQKLEKDKERERS) are enriched in basic and acidic residues. Disordered regions lie at residues 312–361 (QEKE…PIPI), 380–421 (SVNG…PKFK), 445–475 (HLGS…TTPI), 491–525 (ITSP…ILSP), and 619–659 (NNNN…NDNK). 5 stretches are compositionally biased toward low complexity: residues 329–361 (SSFS…PIPI), 390–401 (SSVSPPSSSYLR), 452–475 (TPAN…TTPI), 491–515 (ITSP…SSSS), and 619–655 (NNNN…NNNK). Residues 613 to 666 (NFLKTNNNNNKNNIEESNNNNNNNNNNNNNNNNNNNNNNNNNKNDNKEVNSKLE) are a coiled coil. A PPM-type phosphatase domain is found at 675–958 (KIGLRRAKKK…DNVTVIIVKL (284 aa)). The Mn(2+) site is built by D722, G723, D905, and D949.

It in the C-terminal section; belongs to the PP2C family. Mg(2+) is required as a cofactor. The cofactor is Mn(2+).

The protein resides in the membrane. The catalysed reaction is O-phospho-L-seryl-[protein] + H2O = L-seryl-[protein] + phosphate. It carries out the reaction O-phospho-L-threonyl-[protein] + H2O = L-threonyl-[protein] + phosphate. The chain is Probable protein phosphatase DDB_G0282105 from Dictyostelium discoideum (Social amoeba).